Reading from the N-terminus, the 104-residue chain is Large ribosomal subunit protein bL21 (104 aa).

The protein belongs to the bacterial ribosomal protein bL21 family. Part of the 50S ribosomal subunit. Contacts protein L20.

Its function is as follows. This protein binds to 23S rRNA in the presence of protein L20. The chain is Large ribosomal subunit protein bL21 from Helicobacter pylori (strain Shi470).